We begin with the raw amino-acid sequence, 134 residues long: Large ribosomal subunit protein bL20 (134 aa).

It belongs to the bacterial ribosomal protein bL20 family.

Its function is as follows. Binds directly to 23S ribosomal RNA and is necessary for the in vitro assembly process of the 50S ribosomal subunit. It is not involved in the protein synthesizing functions of that subunit. In Rhizobium rhizogenes (strain K84 / ATCC BAA-868) (Agrobacterium radiobacter), this protein is Large ribosomal subunit protein bL20.